The sequence spans 155 residues: SsrA-binding protein (155 aa).

The protein belongs to the SmpB family.

The protein resides in the cytoplasm. Required for rescue of stalled ribosomes mediated by trans-translation. Binds to transfer-messenger RNA (tmRNA), required for stable association of tmRNA with ribosomes. tmRNA and SmpB together mimic tRNA shape, replacing the anticodon stem-loop with SmpB. tmRNA is encoded by the ssrA gene; the 2 termini fold to resemble tRNA(Ala) and it encodes a 'tag peptide', a short internal open reading frame. During trans-translation Ala-aminoacylated tmRNA acts like a tRNA, entering the A-site of stalled ribosomes, displacing the stalled mRNA. The ribosome then switches to translate the ORF on the tmRNA; the nascent peptide is terminated with the 'tag peptide' encoded by the tmRNA and targeted for degradation. The ribosome is freed to recommence translation, which seems to be the essential function of trans-translation. The sequence is that of SsrA-binding protein from Ligilactobacillus salivarius (strain UCC118) (Lactobacillus salivarius).